Reading from the N-terminus, the 151-residue chain is Large ribosomal subunit protein uL30 (151 aa).

This sequence belongs to the universal ribosomal protein uL30 family. As to quaternary structure, part of the 50S ribosomal subunit.

The polypeptide is Large ribosomal subunit protein uL30 (Methanothrix thermoacetophila (strain DSM 6194 / JCM 14653 / NBRC 101360 / PT) (Methanosaeta thermophila)).